A 468-amino-acid polypeptide reads, in one-letter code: UDP-N-acetylmuramate--L-alanine ligase (468 aa).

114-120 (GTHGKTT) contributes to the ATP binding site.

It belongs to the MurCDEF family.

It localises to the cytoplasm. It catalyses the reaction UDP-N-acetyl-alpha-D-muramate + L-alanine + ATP = UDP-N-acetyl-alpha-D-muramoyl-L-alanine + ADP + phosphate + H(+). The protein operates within cell wall biogenesis; peptidoglycan biosynthesis. Its function is as follows. Cell wall formation. This is UDP-N-acetylmuramate--L-alanine ligase from Brucella anthropi (strain ATCC 49188 / DSM 6882 / CCUG 24695 / JCM 21032 / LMG 3331 / NBRC 15819 / NCTC 12168 / Alc 37) (Ochrobactrum anthropi).